We begin with the raw amino-acid sequence, 857 residues long: Major vault protein (857 aa).

MVP repeat units follow at residues 18–60, 62–122, 123–174, 175–227, 228–282, 284–332, 333–387, and 388–441; these read PYYY…ITIP, RHYC…KVVQ, ANAA…TIIR, PNQA…YVLT, EKNA…NTLT, RQYC…FILG, EDEG…IPLD, and ENEG…VAER. Positions 434-453 are disordered; it reads AKDPVAERSDRRGDRAAPRA. The span at 437–453 shows a compositional bias: basic and acidic residues; it reads PVAERSDRRGDRAAPRA. Residues 665–694 enclose the IQ domain; it reads ARHEAERLEQEARGRLERQKIMDEAEAEKS.

The vault ribonucleoprotein particle is a huge (400 A x 670 A) cage structure of 12.9 MDa. It consists of a dimer of half-vaults, with each half-vault comprising 39 identical major vault protein (MVP) chains, PARP4 and one or more vault RNAs (vRNAs). As to expression, expressed in embryos, tube feet and coelomocytes (at protein level). Not expressed in sperm cells (at protein level).

The protein resides in the cytoplasm. It localises to the nucleus. Functionally, required for normal vault structure. Vaults are multi-subunit structures that may act as scaffolds for proteins involved in signal transduction. Vaults may also play a role in nucleo-cytoplasmic transport. In Strongylocentrotus purpuratus (Purple sea urchin), this protein is Major vault protein.